The primary structure comprises 340 residues: MRMVCLGLNHRTAPVEIRERFAVPSHKLREEGQRIRSLPGVDQCVVLSTCNRMEIYYWSNAPENAQEHILSHFLGDGRGELDMASYFYSHQGEDALGHLCRVLSGLDSMVLGETEIFGQVKTAYQTALDAGVTAACANKTFQKAFTIGKKVRTESQIHAGATSVGSVAVELAEQIFGDLSGTRVLILGAGEMSRVTGRALHARGAEGIYVANRSFDRAVELAGMIGGQAIRYDVWGNYLRDIDVVVAATAAPHCIITRETLLPLRASRKYRSLFLIDISVPRNISPDVADIDEVYLYDIDTLTQLADEAKRSRKQEVSRCEAIIRDSISRYFPDSALYDQ.

Residues 49 to 52 (TCNR), serine 108, 113 to 115 (ETE), and glutamine 119 contribute to the substrate site. Cysteine 50 (nucleophile) is an active-site residue. 188-193 (GAGEMS) contacts NADP(+).

This sequence belongs to the glutamyl-tRNA reductase family. In terms of assembly, homodimer.

The enzyme catalyses (S)-4-amino-5-oxopentanoate + tRNA(Glu) + NADP(+) = L-glutamyl-tRNA(Glu) + NADPH + H(+). It participates in porphyrin-containing compound metabolism; protoporphyrin-IX biosynthesis; 5-aminolevulinate from L-glutamyl-tRNA(Glu): step 1/2. Catalyzes the NADPH-dependent reduction of glutamyl-tRNA(Glu) to glutamate 1-semialdehyde (GSA). The sequence is that of Glutamyl-tRNA reductase from Akkermansia muciniphila (strain ATCC BAA-835 / DSM 22959 / JCM 33894 / BCRC 81048 / CCUG 64013 / CIP 107961 / Muc).